Consider the following 156-residue polypeptide: Single-stranded DNA-binding protein 1 (156 aa).

Positions 1–104 (MLNRTILVGR…VVADSIQFLE (104 aa)) constitute an SSB domain. Positions 122 to 146 (QTRGQSQYSNNKPVKDNPFANANCP) are disordered.

As to quaternary structure, homotetramer.

This is Single-stranded DNA-binding protein 1 (ssb1) from Staphylococcus aureus (strain MSSA476).